The sequence spans 350 residues: Histidinol-phosphate aminotransferase (350 aa).

Residue K209 is modified to N6-(pyridoxal phosphate)lysine.

It belongs to the class-II pyridoxal-phosphate-dependent aminotransferase family. Histidinol-phosphate aminotransferase subfamily. Homodimer. Requires pyridoxal 5'-phosphate as cofactor.

It carries out the reaction L-histidinol phosphate + 2-oxoglutarate = 3-(imidazol-4-yl)-2-oxopropyl phosphate + L-glutamate. It participates in amino-acid biosynthesis; L-histidine biosynthesis; L-histidine from 5-phospho-alpha-D-ribose 1-diphosphate: step 7/9. The chain is Histidinol-phosphate aminotransferase from Christiangramia forsetii (strain DSM 17595 / CGMCC 1.15422 / KT0803) (Gramella forsetii).